The primary structure comprises 141 residues: Large ribosomal subunit protein uL11 (141 aa).

It belongs to the universal ribosomal protein uL11 family. In terms of assembly, part of the ribosomal stalk of the 50S ribosomal subunit. Interacts with L10 and the large rRNA to form the base of the stalk. L10 forms an elongated spine to which L12 dimers bind in a sequential fashion forming a multimeric L10(L12)X complex. One or more lysine residues are methylated.

Forms part of the ribosomal stalk which helps the ribosome interact with GTP-bound translation factors. This Streptococcus suis (strain 98HAH33) protein is Large ribosomal subunit protein uL11.